The primary structure comprises 183 residues: Endoribonuclease YbeY (183 aa).

The Zn(2+) site is built by His143, His147, and His153.

This sequence belongs to the endoribonuclease YbeY family. Zn(2+) serves as cofactor.

It is found in the cytoplasm. In terms of biological role, single strand-specific metallo-endoribonuclease involved in late-stage 70S ribosome quality control and in maturation of the 3' terminus of the 16S rRNA. The chain is Endoribonuclease YbeY from Rickettsia bellii (strain RML369-C).